A 118-amino-acid polypeptide reads, in one-letter code: Hisactophilin-2 (118 aa).

Residue G2 is the site of N-myristoyl glycine attachment. The interval 8-109 is contains several HHXH repeats; sequence AHNGHYLSAE…HVSTSHHHDH (102 aa). 2 repeat units span residues 34-46 and 74-86. Residues 34-86 are 2 X 13 AA approximate repeats; that stretch reads FHIENHGSKVALRTHCGKYVSIGDHKQVYLSHHLHGDHSLFHLEHHHGKVSIK. The disordered stretch occupies residues 99–118; that stretch reads GHVSTSHHHDHHATFEEHIL.

The protein belongs to the hisactophilin family. Homodimer or heterodimer of hatA and hatB, linked by a disulfide bond. Post-translationally, phosphorylated.

It is found in the cytoplasm. Its subcellular location is the cell membrane. May act as an intracellular pH sensor that links chemotactic signals to responses in the microfilament system of the cells by nucleating actin polymerization or stabilizing the filaments. This is Hisactophilin-2 (hatB) from Dictyostelium discoideum (Social amoeba).